Reading from the N-terminus, the 281-residue chain is uncharacterized protein (281 aa).

The protein resides in the plastid. It localises to the chloroplast. This is an uncharacterized protein from Euglena gracilis.